Reading from the N-terminus, the 242-residue chain is ATP synthase subunit a, organellar chromatophore (242 aa).

A run of 5 helical transmembrane segments spans residues 28 to 48 (LHGQVFISSWVVISALLVLVI), 89 to 109 (LPFIGTLFLFIFGCNWGGALV), 128 to 148 (INTTVAMALLVSLSYFYAGLS), 193 to 213 (LVVGVLAFLVPILVPLPAMFL), and 214 to 234 (GLFTSAIQALIFATLAANYIG).

It belongs to the ATPase A chain family. As to quaternary structure, F-type ATPases have 2 components, CF(1) - the catalytic core - and CF(0) - the membrane proton channel. CF(1) has five subunits: alpha(3), beta(3), gamma(1), delta(1), epsilon(1). CF(0) has four main subunits: a, b, b' and c.

The protein resides in the plastid. Its subcellular location is the organellar chromatophore thylakoid membrane. Its function is as follows. Key component of the proton channel; it plays a direct role in the translocation of protons across the membrane. The polypeptide is ATP synthase subunit a, organellar chromatophore (Paulinella chromatophora).